We begin with the raw amino-acid sequence, 189 residues long: Chitin synthase 1 (189 aa).

It belongs to the chitin synthase family.

The protein resides in the cell membrane. The catalysed reaction is [(1-&gt;4)-N-acetyl-beta-D-glucosaminyl](n) + UDP-N-acetyl-alpha-D-glucosamine = [(1-&gt;4)-N-acetyl-beta-D-glucosaminyl](n+1) + UDP + H(+). Polymerizes chitin, a structural polymer of the cell wall and septum, by transferring the sugar moiety of UDP-GlcNAc to the non-reducing end of the growing chitin polymer. This chain is Chitin synthase 1 (CHS1), found in Exophiala exophialae (Black yeast-like fungus).